The following is a 470-amino-acid chain: Uronate isomerase (470 aa).

It belongs to the metallo-dependent hydrolases superfamily. Uronate isomerase family.

The enzyme catalyses D-glucuronate = D-fructuronate. It carries out the reaction aldehydo-D-galacturonate = keto-D-tagaturonate. It participates in carbohydrate metabolism; pentose and glucuronate interconversion. The sequence is that of Uronate isomerase from Vibrio vulnificus (strain YJ016).